Here is a 238-residue protein sequence, read N- to C-terminus: Ribosomal RNA small subunit methyltransferase E 1 (238 aa).

This sequence belongs to the RNA methyltransferase RsmE family.

The protein localises to the cytoplasm. It catalyses the reaction uridine(1498) in 16S rRNA + S-adenosyl-L-methionine = N(3)-methyluridine(1498) in 16S rRNA + S-adenosyl-L-homocysteine + H(+). Its function is as follows. Specifically methylates the N3 position of the uracil ring of uridine 1498 (m3U1498) in 16S rRNA. Acts on the fully assembled 30S ribosomal subunit. This chain is Ribosomal RNA small subunit methyltransferase E 1 (rsmE1), found in Borreliella burgdorferi (strain ATCC 35210 / DSM 4680 / CIP 102532 / B31) (Borrelia burgdorferi).